The following is a 317-amino-acid chain: Beta-ketoacyl-[acyl-carrier-protein] synthase III (317 aa).

Residues Cys-112 and His-244 contribute to the active site. Residues 245–249 are ACP-binding; sequence QANLR. Residue Asn-274 is part of the active site.

This sequence belongs to the thiolase-like superfamily. FabH family. Homodimer.

Its subcellular location is the cytoplasm. The catalysed reaction is malonyl-[ACP] + acetyl-CoA + H(+) = 3-oxobutanoyl-[ACP] + CO2 + CoA. It functions in the pathway lipid metabolism; fatty acid biosynthesis. In terms of biological role, catalyzes the condensation reaction of fatty acid synthesis by the addition to an acyl acceptor of two carbons from malonyl-ACP. Catalyzes the first condensation reaction which initiates fatty acid synthesis and may therefore play a role in governing the total rate of fatty acid production. Possesses both acetoacetyl-ACP synthase and acetyl transacylase activities. Its substrate specificity determines the biosynthesis of branched-chain and/or straight-chain of fatty acids. The polypeptide is Beta-ketoacyl-[acyl-carrier-protein] synthase III (Enterobacter sp. (strain 638)).